Reading from the N-terminus, the 119-residue chain is Microtubule nucleation factor SSNA1 (119 aa).

Thr2 is modified (N-acetylthreonine). The segment at 2-32 (TQQGAALQNYNNELVKCIEELCQKREELCRQ) is important for localization to the centrosome. Residues 13-70 (NELVKCIEELCQKREELCRQIQEEEDEKQRLQNEVRQLTEKLARVNENLARKIASRNE) adopt a coiled-coil conformation.

The protein belongs to the SSNA1 family. In terms of assembly, self-associates to form fibrils. Also forms dimers as well as monomers. Interacts with SPAST. Widely expressed.

The protein resides in the nucleus. Its subcellular location is the cytoplasm. It is found in the cytoskeleton. The protein localises to the microtubule organizing center. It localises to the centrosome. The protein resides in the centriole. Its subcellular location is the midbody. It is found in the flagellum basal body. The protein localises to the flagellum axoneme. It localises to the cell projection. The protein resides in the axon. Its function is as follows. Microtubule-binding protein which stabilizes dynamic microtubules by slowing growth and shrinkage at both plus and minus ends and serves as a sensor of microtubule damage, protecting microtubules from the microtubule-severing enzyme SPAST. Induces microtubule branching which is mediated by the formation of long SSNA1 fibrils which guide microtubule protofilaments to split apart from the mother microtubule and form daughter microtubules. Plays a role in axon outgrowth and branching. Required for cell division. This Homo sapiens (Human) protein is Microtubule nucleation factor SSNA1.